Reading from the N-terminus, the 415-residue chain is Multidrug resistance protein MdtA (415 aa).

Positions 1 to 21 are cleaved as a signal peptide; the sequence is MKGSYKSRWVIVIVVVIAAIA. Residues 34–47 show a composition bias toward polar residues; it reads SAAPGATKQAQQSP. 2 disordered regions span residues 34–60 and 392–415; these read SAAP…GPLA and EAQS…GARS. The segment covering 399-415 has biased composition (basic and acidic residues); it reads PEEKATSREYAKKGARS.

It belongs to the membrane fusion protein (MFP) (TC 8.A.1) family. In terms of assembly, part of a tripartite efflux system composed of MdtA, MdtB and MdtC.

Its subcellular location is the cell inner membrane. Its function is as follows. The MdtABC tripartite complex confers resistance against novobiocin and deoxycholate. The polypeptide is Multidrug resistance protein MdtA (Escherichia fergusonii (strain ATCC 35469 / DSM 13698 / CCUG 18766 / IAM 14443 / JCM 21226 / LMG 7866 / NBRC 102419 / NCTC 12128 / CDC 0568-73)).